A 119-amino-acid chain; its full sequence is Ribonuclease P protein component (119 aa).

It belongs to the RnpA family. Consists of a catalytic RNA component (M1 or rnpB) and a protein subunit.

The catalysed reaction is Endonucleolytic cleavage of RNA, removing 5'-extranucleotides from tRNA precursor.. In terms of biological role, RNaseP catalyzes the removal of the 5'-leader sequence from pre-tRNA to produce the mature 5'-terminus. It can also cleave other RNA substrates such as 4.5S RNA. The protein component plays an auxiliary but essential role in vivo by binding to the 5'-leader sequence and broadening the substrate specificity of the ribozyme. In Mycobacterium avium (strain 104), this protein is Ribonuclease P protein component.